The sequence spans 247 residues: 7-carboxy-7-deazaguanine synthase (247 aa).

Substrate contacts are provided by residues 15–17 (IQG) and R30. A Radical SAM core domain is found at 21–247 (LVGRRQIFVR…PQMHRALGLR (227 aa)). [4Fe-4S] cluster contacts are provided by C34, C38, and C41. T43 lines the Mg(2+) pocket. T78 is a binding site for substrate. G80 contacts S-adenosyl-L-methionine.

Belongs to the radical SAM superfamily. 7-carboxy-7-deazaguanine synthase family. As to quaternary structure, homodimer. Requires [4Fe-4S] cluster as cofactor. It depends on S-adenosyl-L-methionine as a cofactor. Mg(2+) is required as a cofactor.

It catalyses the reaction 6-carboxy-5,6,7,8-tetrahydropterin + H(+) = 7-carboxy-7-deazaguanine + NH4(+). It functions in the pathway purine metabolism; 7-cyano-7-deazaguanine biosynthesis. Functionally, catalyzes the complex heterocyclic radical-mediated conversion of 6-carboxy-5,6,7,8-tetrahydropterin (CPH4) to 7-carboxy-7-deazaguanine (CDG), a step common to the biosynthetic pathways of all 7-deazapurine-containing compounds. In Methanothermobacter thermautotrophicus (strain ATCC 29096 / DSM 1053 / JCM 10044 / NBRC 100330 / Delta H) (Methanobacterium thermoautotrophicum), this protein is 7-carboxy-7-deazaguanine synthase.